The following is a 60-amino-acid chain: Cytotoxin 1 (60 aa).

4 disulfide bridges follow: Cys-3–Cys-21, Cys-14–Cys-38, Cys-42–Cys-53, and Cys-54–Cys-59.

This sequence belongs to the three-finger toxin family. Short-chain subfamily. Type IA cytotoxin sub-subfamily. Monomer in solution; Homodimer and oligomer in the presence of negatively charged lipids forming a pore with a size ranging between 20 and 30 angstroms. As to expression, expressed by the venom gland.

Its subcellular location is the secreted. The protein localises to the target cell membrane. In terms of biological role, basic protein that binds to cell membrane and depolarizes cardiomyocytes. This cytotoxin also possesses lytic activity on many other cells, including red blood cells. Interaction with sulfatides in the cell membrane induces pore formation and cell internalization and is responsible for cytotoxicity in cardiomyocytes. It targets the mitochondrial membrane and induces mitochondrial swelling and fragmentation. Inhibits protein kinases C. It binds to the integrin alpha-V/beta-3 with a moderate affinity. This Naja pallida (Red spitting cobra) protein is Cytotoxin 1.